An 864-amino-acid chain; its full sequence is Coiled-coil and C2 domain-containing protein 1B (864 aa).

A disordered region spans residues 82 to 154 (QDCMTDMTGE…VNSSVAEIQH (73 aa)). Acidic residues-rich tracts occupy residues 89 to 104 (TGEDDDDDLEEDEELL) and 111 to 129 (VGEEEEVEQSQPSDTEESE). Residues 91 to 118 (EDDDDDLEEDEELLAELQDVVGEEEEVE) are a coiled coil. The segment covering 142 to 154 (EQQVNSSVAEIQH) has biased composition (polar residues). The stretch at 162 to 209 (GMLQVLEERIGNYKEAISNAKLSNESAKARRYERGLKTLESMLSAARQ) forms a coiled coil. Positions 218-249 (IPPPVACGKPAVSPTTDVPTTDTSKQGLGDLN) are disordered. Low complexity predominate over residues 229–241 (VSPTTDVPTTDTS). A coiled-coil region spans residues 385 to 412 (VGSLLQALQQRMEKYKSAAQQAKSSGDD). Disordered regions lie at residues 441–463 (AELPVPPGFPPLPGMEQTEEEGS) and 478–502 (AGEDVDDDEDECQAKPPGHPKPTQL). A compositionally biased stretch (pro residues) spans 444–453 (PVPPGFPPLP). Coiled coils occupy residues 464–488 (VEKALEAAQKLAKTAGEDVDDDEDE) and 535–564 (PAVQEQLEFLEHRKKQYRKAALQAKQKNDL). One can recognise a C2 domain in the interval 685 to 820 (HFEDKTLKIV…ETQCEIREIV (136 aa)).

It belongs to the CC2D1 family.

The chain is Coiled-coil and C2 domain-containing protein 1B (cc2d1b) from Xenopus laevis (African clawed frog).